The following is a 333-amino-acid chain: uncharacterized protein (333 aa).

The Radical SAM core domain maps to 67–274 (HFYPTTQVVS…LEMARNLAIE (208 aa)). The [4Fe-4S] cluster site is built by cysteine 82, cysteine 86, and cysteine 89.

It depends on [4Fe-4S] cluster as a cofactor.

This is an uncharacterized protein from Methanocaldococcus jannaschii (strain ATCC 43067 / DSM 2661 / JAL-1 / JCM 10045 / NBRC 100440) (Methanococcus jannaschii).